Reading from the N-terminus, the 304-residue chain is Oxygen-dependent coproporphyrinogen-III oxidase (304 aa).

Serine 94 contacts substrate. A divalent metal cation is bound by residues histidine 98 and histidine 108. The Proton donor role is filled by histidine 108. 110 to 112 provides a ligand contact to substrate; that stretch reads NVR. Residues histidine 147 and histidine 177 each contribute to the a divalent metal cation site. The interval 242-277 is important for dimerization; sequence YVEFNLVYDRGTLFGLQSGGRTESILMSLPPVAHWR. Residue 260–262 coordinates substrate; the sequence is GGR.

Belongs to the aerobic coproporphyrinogen-III oxidase family. Homodimer. Requires a divalent metal cation as cofactor.

It is found in the cytoplasm. The enzyme catalyses coproporphyrinogen III + O2 + 2 H(+) = protoporphyrinogen IX + 2 CO2 + 2 H2O. The protein operates within porphyrin-containing compound metabolism; protoporphyrin-IX biosynthesis; protoporphyrinogen-IX from coproporphyrinogen-III (O2 route): step 1/1. Functionally, involved in the heme biosynthesis. Catalyzes the aerobic oxidative decarboxylation of propionate groups of rings A and B of coproporphyrinogen-III to yield the vinyl groups in protoporphyrinogen-IX. The sequence is that of Oxygen-dependent coproporphyrinogen-III oxidase from Methylococcus capsulatus (strain ATCC 33009 / NCIMB 11132 / Bath).